The chain runs to 785 residues: Neutral ceramidase (785 aa).

The N-terminal stretch at 1–35 is a signal peptide; that stretch reads MEASSWLCYQARGFGSSRVWLWLLLALVLLNCSLV. Asparagine 31 carries an N-linked (GlcNAc...) asparagine glycan. Catalysis depends on serine 359, which acts as the Nucleophile. N-linked (GlcNAc...) asparagine glycosylation is found at asparagine 377, asparagine 675, and asparagine 685.

The protein belongs to the neutral ceramidase family. As to expression, expressed in seedlings, with higher levels in roots than in shoots.

It localises to the secreted. The protein resides in the endoplasmic reticulum. It is found in the golgi apparatus. It catalyses the reaction an N-acylsphing-4-enine + H2O = sphing-4-enine + a fatty acid. Its activity is regulated as follows. Enhanced activity in the presence of calcium, magnesium, manganese and zinc ions, but inhibited activity in the presence of iron ion. Functionally, hydrolyzes the sphingolipid ceramide into sphingosine and free fatty acid. Uses ceramide instead of phytoceramide as substrate. The protein is Neutral ceramidase of Oryza sativa subsp. japonica (Rice).